We begin with the raw amino-acid sequence, 44 residues long: F420-non-reducing hydrogenase vhu subunit U (44 aa).

2 residues coordinate Ni(2+): selenocysteine 20 and cysteine 23. Position 20 (selenocysteine 20) is a non-standard amino acid, selenocysteine. Residues 27–44 (MIVEDAEGNVVFEIVNDE) constitute a propeptide, removed in mature form.

It belongs to the [NiFe]/[NiFeSe] hydrogenase large subunit family. The F420-non-reducing hydrogenase vhu is composed of four subunits; VhuA, VhuD, VhuG and VhuU. Requires Ni(2+) as cofactor.

This chain is F420-non-reducing hydrogenase vhu subunit U (vhuU), found in Methanococcus voltae.